The chain runs to 270 residues: 3-phenylpropionate-dihydrodiol/cinnamic acid-dihydrodiol dehydrogenase (270 aa).

Residue F10 to A34 participates in NAD(+) binding. S143 is a binding site for substrate. Catalysis depends on Y156, which acts as the Proton acceptor.

The protein belongs to the short-chain dehydrogenases/reductases (SDR) family.

The enzyme catalyses 3-(cis-5,6-dihydroxycyclohexa-1,3-dien-1-yl)propanoate + NAD(+) = 3-(2,3-dihydroxyphenyl)propanoate + NADH + H(+). The catalysed reaction is (2E)-3-(cis-5,6-dihydroxycyclohexa-1,3-dien-1-yl)prop-2-enoate + NAD(+) = (2E)-3-(2,3-dihydroxyphenyl)prop-2-enoate + NADH + H(+). Its pathway is aromatic compound metabolism; 3-phenylpropanoate degradation. In terms of biological role, converts 3-phenylpropionate-dihydrodiol (PP-dihydrodiol) and cinnamic acid-dihydrodiol (CI-dihydrodiol) into 3-(2,3-dihydroxylphenyl)propanoic acid (DHPP) and 2,3-dihydroxicinnamic acid (DHCI), respectively. The sequence is that of 3-phenylpropionate-dihydrodiol/cinnamic acid-dihydrodiol dehydrogenase from Shigella flexneri serotype 5b (strain 8401).